The sequence spans 163 residues: Protein-export protein SecB (163 aa).

Belongs to the SecB family. As to quaternary structure, homotetramer, a dimer of dimers. One homotetramer interacts with 1 SecA dimer.

It is found in the cytoplasm. One of the proteins required for the normal export of preproteins out of the cell cytoplasm. It is a molecular chaperone that binds to a subset of precursor proteins, maintaining them in a translocation-competent state. It also specifically binds to its receptor SecA. The sequence is that of Protein-export protein SecB from Burkholderia cenocepacia (strain ATCC BAA-245 / DSM 16553 / LMG 16656 / NCTC 13227 / J2315 / CF5610) (Burkholderia cepacia (strain J2315)).